A 602-amino-acid polypeptide reads, in one-letter code: Elongation factor 4 (602 aa).

A tr-type G domain is found at 8–190 (DLIRNFSIVA…AIVHRLPPPK (183 aa)). GTP-binding positions include 20–25 (DHGKST) and 137–140 (NKID).

Belongs to the TRAFAC class translation factor GTPase superfamily. Classic translation factor GTPase family. LepA subfamily.

The protein resides in the cell inner membrane. The enzyme catalyses GTP + H2O = GDP + phosphate + H(+). Required for accurate and efficient protein synthesis under certain stress conditions. May act as a fidelity factor of the translation reaction, by catalyzing a one-codon backward translocation of tRNAs on improperly translocated ribosomes. Back-translocation proceeds from a post-translocation (POST) complex to a pre-translocation (PRE) complex, thus giving elongation factor G a second chance to translocate the tRNAs correctly. Binds to ribosomes in a GTP-dependent manner. The protein is Elongation factor 4 of Cereibacter sphaeroides (strain KD131 / KCTC 12085) (Rhodobacter sphaeroides).